Consider the following 104-residue polypeptide: UPF0235 protein Sfri_2863 (104 aa).

The protein belongs to the UPF0235 family.

In Shewanella frigidimarina (strain NCIMB 400), this protein is UPF0235 protein Sfri_2863.